The primary structure comprises 239 residues: Transcriptional regulatory protein RstA (239 aa).

The Response regulatory domain maps to 3–116; it reads TIVFVEDDAE…VLLARLRLHL (114 aa). A 4-aspartylphosphate modification is found at Asp52. The ompR/PhoB-type DNA-binding region spans 136 to 235; it reads YKALHFGTLT…VRNKGYLFAP (100 aa).

Phosphorylated by RstB.

It localises to the cytoplasm. In terms of biological role, member of the two-component regulatory system RstB/RstA. This is Transcriptional regulatory protein RstA (rstA) from Escherichia coli (strain K12).